A 224-amino-acid chain; its full sequence is Putative gastrointestinal growth factor xP4 (224 aa).

An N-terminal signal peptide occupies residues 1 to 17 (MANSVFWAIAVALVLGA). 4 consecutive P-type domains span residues 25-68 (YRCG…YTPW), 73-117 (TICN…YQPI), 123-167 (RDCS…FKPE), and 173-216 (LQCA…FYPD). 12 disulfides stabilise this stretch: Cys27-Cys53, Cys37-Cys52, Cys47-Cys64, Cys75-Cys102, Cys86-Cys101, Cys96-Cys113, Cys125-Cys152, Cys136-Cys151, Cys146-Cys163, Cys175-Cys201, Cys185-Cys200, and Cys195-Cys212. A glycan (N-linked (GlcNAc...) asparagine) is linked at Asn104.

Post-translationally, glycosylated. In terms of tissue distribution, stomach mucosa.

It localises to the secreted. In terms of biological role, may act as a growth factor. The protein is Putative gastrointestinal growth factor xP4 (p4) of Xenopus laevis (African clawed frog).